The following is a 102-amino-acid chain: Small ribosomal subunit protein uS10 (102 aa).

Belongs to the universal ribosomal protein uS10 family. As to quaternary structure, part of the 30S ribosomal subunit.

Its function is as follows. Involved in the binding of tRNA to the ribosomes. The protein is Small ribosomal subunit protein uS10 of Streptococcus thermophilus (strain ATCC BAA-250 / LMG 18311).